Here is a 169-residue protein sequence, read N- to C-terminus: E1B protein, small T-antigen (169 aa).

It belongs to the adenoviridae E1B 19 kDa protein family.

This is E1B protein, small T-antigen from Canis lupus familiaris (Dog).